Reading from the N-terminus, the 484-residue chain is tRNA-2-methylthio-N(6)-dimethylallyladenosine synthase (484 aa).

Positions 36-153 constitute an MTTase N-terminal domain; that stretch reads GKLYIKTHGC…LPELIRARRE (118 aa). The [4Fe-4S] cluster site is built by cysteine 45, cysteine 82, cysteine 116, cysteine 190, cysteine 194, and cysteine 197. The region spanning 176 to 415 is the Radical SAM core domain; that stretch reads RAEGPSAFVS…HINAHAASIS (240 aa). The TRAM domain maps to 416–479; that stretch reads QSMVGSVQRV…SNSLRGRIQL (64 aa). Residues 428 to 450 are disordered; that stretch reads EGPSRRDPNELTGKSENMRPVNF.

It belongs to the methylthiotransferase family. MiaB subfamily. Monomer. The cofactor is [4Fe-4S] cluster.

It localises to the cytoplasm. The catalysed reaction is N(6)-dimethylallyladenosine(37) in tRNA + (sulfur carrier)-SH + AH2 + 2 S-adenosyl-L-methionine = 2-methylsulfanyl-N(6)-dimethylallyladenosine(37) in tRNA + (sulfur carrier)-H + 5'-deoxyadenosine + L-methionine + A + S-adenosyl-L-homocysteine + 2 H(+). Its function is as follows. Catalyzes the methylthiolation of N6-(dimethylallyl)adenosine (i(6)A), leading to the formation of 2-methylthio-N6-(dimethylallyl)adenosine (ms(2)i(6)A) at position 37 in tRNAs that read codons beginning with uridine. In Xanthomonas euvesicatoria pv. vesicatoria (strain 85-10) (Xanthomonas campestris pv. vesicatoria), this protein is tRNA-2-methylthio-N(6)-dimethylallyladenosine synthase.